Reading from the N-terminus, the 131-residue chain is Large ribosomal subunit protein bL17 (131 aa).

Belongs to the bacterial ribosomal protein bL17 family. In terms of assembly, part of the 50S ribosomal subunit. Contacts protein L32.

This chain is Large ribosomal subunit protein bL17, found in Shewanella violacea (strain JCM 10179 / CIP 106290 / LMG 19151 / DSS12).